The primary structure comprises 292 residues: Protease HtpX (292 aa).

Transmembrane regions (helical) follow at residues 4–24 (IILFLLTNLAVMLTFSLILAV) and 32–52 (IYGLLIMSSLFGFSGSILSLI). His139 contributes to the Zn(2+) binding site. Residue Glu140 is part of the active site. His143 contributes to the Zn(2+) binding site. The next 2 helical transmembrane spans lie at 150–170 (ITMTLVQGVVNTFVIFISRII) and 193–213 (FLFFLISTFLEIIFGVLASII). Glu222 serves as a coordination point for Zn(2+).

It belongs to the peptidase M48B family. Requires Zn(2+) as cofactor.

It localises to the cell membrane. This Buchnera aphidicola subsp. Schizaphis graminum (strain Sg) protein is Protease HtpX.